Consider the following 291-residue polypeptide: Verruculogen synthase (291 aa).

Y68 is a catalytic residue.

This sequence belongs to the PhyH family. Homodimer. It depends on Fe cation as a cofactor.

The catalysed reaction is fumitremorgin B + 2-oxoglutarate + AH2 + 2 O2 = verruculogen + succinate + A + CO2 + H2O. The protein operates within mycotoxin biosynthesis. Functionally, verruculogen synthase; part of the gene cluster that mediates the biosynthesis of fumitremorgins, indole alkaloids that carry not only intriguing chemical structures, but also interesting biological and pharmacological activities. The biosynthesis of fumitremorgin-type alkaloids begins by condensation of the two amino acids L-tryptophan and L-proline to brevianamide F, catalyzed by the non-ribosomal peptide synthetase ftmA. Brevianamide F is then prenylated by the prenyltransferase ftmPT1/ftmB in the presence of dimethylallyl diphosphate, resulting in the formation of tryprostatin B. The three cytochrome P450 monooxygenases, ftmP450-1/ftmC, ftmP450-2/ftmE and ftmP450-3/FtmG, are responsible for the conversion of tryprostatin B to 6-hydroxytryprostatin B, tryprostatin A to fumitremorgin C and fumitremorgin C to 12,13-dihydroxyfumitremorgin C, respectively. The putative methyltransferase ftmMT/ftmD is expected for the conversion of 6-hydroxytryprostatin B to tryprostatin A. FtmPT2/FtmH catalyzes the prenylation of 12,13-dihydroxyfumitre-morgin C in the presence of dimethylallyl diphosphate, resulting in the formation of fumitremorgin B. Fumitremorgin B is further converted to verruculogen by ftmOx1/ftmF via the insertion of an endoperoxide bond between the two prenyl moieties. In some fungal species, verruculogen is further converted to fumitremorgin A, but the enzymes involved in this step have not been identified yet. The polypeptide is Verruculogen synthase (Aspergillus fumigatus (Neosartorya fumigata)).